Here is a 251-residue protein sequence, read N- to C-terminus: Imidazole glycerol phosphate synthase subunit HisF (251 aa).

Residues aspartate 10 and aspartate 129 contribute to the active site.

Belongs to the HisA/HisF family. In terms of assembly, heterodimer of HisH and HisF.

It is found in the cytoplasm. It catalyses the reaction 5-[(5-phospho-1-deoxy-D-ribulos-1-ylimino)methylamino]-1-(5-phospho-beta-D-ribosyl)imidazole-4-carboxamide + L-glutamine = D-erythro-1-(imidazol-4-yl)glycerol 3-phosphate + 5-amino-1-(5-phospho-beta-D-ribosyl)imidazole-4-carboxamide + L-glutamate + H(+). The protein operates within amino-acid biosynthesis; L-histidine biosynthesis; L-histidine from 5-phospho-alpha-D-ribose 1-diphosphate: step 5/9. Functionally, IGPS catalyzes the conversion of PRFAR and glutamine to IGP, AICAR and glutamate. The HisF subunit catalyzes the cyclization activity that produces IGP and AICAR from PRFAR using the ammonia provided by the HisH subunit. This chain is Imidazole glycerol phosphate synthase subunit HisF, found in Cutibacterium acnes (strain DSM 16379 / KPA171202) (Propionibacterium acnes).